A 340-amino-acid chain; its full sequence is Ketol-acid reductoisomerase (NADP(+)) (340 aa).

Residues 2-181 form the KARI N-terminal Rossmann domain; that stretch reads VKMYYEADVK…GCTKAGVIET (180 aa). Residues 25–28, Arg48, Ser52, and 82–85 contribute to the NADP(+) site; these read YGSQ and DERQ. Residue His107 is part of the active site. Residue Gly133 participates in NADP(+) binding. The 146-residue stretch at 182–327 folds into the KARI C-terminal knotted domain; sequence SFREETETDL…EQLRGMMSWI (146 aa). Mg(2+) is bound by residues Asp190, Glu194, Glu226, and Glu230. Ser251 contributes to the substrate binding site.

This sequence belongs to the ketol-acid reductoisomerase family. Mg(2+) is required as a cofactor.

It catalyses the reaction (2R)-2,3-dihydroxy-3-methylbutanoate + NADP(+) = (2S)-2-acetolactate + NADPH + H(+). The enzyme catalyses (2R,3R)-2,3-dihydroxy-3-methylpentanoate + NADP(+) = (S)-2-ethyl-2-hydroxy-3-oxobutanoate + NADPH + H(+). It participates in amino-acid biosynthesis; L-isoleucine biosynthesis; L-isoleucine from 2-oxobutanoate: step 2/4. It functions in the pathway amino-acid biosynthesis; L-valine biosynthesis; L-valine from pyruvate: step 2/4. Functionally, involved in the biosynthesis of branched-chain amino acids (BCAA). Catalyzes an alkyl-migration followed by a ketol-acid reduction of (S)-2-acetolactate (S2AL) to yield (R)-2,3-dihydroxy-isovalerate. In the isomerase reaction, S2AL is rearranged via a Mg-dependent methyl migration to produce 3-hydroxy-3-methyl-2-ketobutyrate (HMKB). In the reductase reaction, this 2-ketoacid undergoes a metal-dependent reduction by NADPH to yield (R)-2,3-dihydroxy-isovalerate. This Brevibacillus brevis (strain 47 / JCM 6285 / NBRC 100599) protein is Ketol-acid reductoisomerase (NADP(+)).